Here is a 317-residue protein sequence, read N- to C-terminus: NAC domain-containing protein 19 (317 aa).

The region spanning 14–162 (LPPGFRFYPT…DWVLCRIYKK (149 aa)) is the NAC domain.

As to quaternary structure, dimer. Interacts with RHA2A, RHA2B or RHG1A, but not with RHA3A or RHA3B. As to expression, expressed in stems, flowers, cauline leaves and rosettes.

The protein resides in the nucleus. Its function is as follows. Transcription factors that bind specifically to the 5'-CATGTG-3' motif. The polypeptide is NAC domain-containing protein 19 (NAC019) (Arabidopsis thaliana (Mouse-ear cress)).